Here is a 168-residue protein sequence, read N- to C-terminus: Photosystem I assembly protein Ycf3 (168 aa).

TPR repeat units lie at residues alanine 35–proline 68, serine 72–leucine 105, and glycine 120–asparagine 153.

The protein belongs to the Ycf3 family.

Its subcellular location is the plastid. The protein resides in the chloroplast thylakoid membrane. In terms of biological role, essential for the assembly of the photosystem I (PSI) complex. May act as a chaperone-like factor to guide the assembly of the PSI subunits. The protein is Photosystem I assembly protein Ycf3 of Morus indica (Mulberry).